The primary structure comprises 1032 residues: Unconventional myosin-Ih (1032 aa).

Residues 12–701 enclose the Myosin motor domain; sequence GVQDFVLLDA…TLFATEDAFE (690 aa). 105–112 provides a ligand contact to ATP; it reads GESGAGKT. Ser365 is modified (phosphoserine). The tract at residues 578–600 is actin-binding; sequence LSSLLETLISKEPSYIRCIKPND. 2 consecutive IQ domains span residues 704–726 and 727–756; these read KHQL…EYVK and KRQA…AVRI. Residues 855–1029 enclose the TH1 domain; the sequence is KDGYTESLNQ…NGQLTVVSVR (175 aa).

Belongs to the TRAFAC class myosin-kinesin ATPase superfamily. Myosin family.

Its function is as follows. Myosins are actin-based motor molecules with ATPase activity. Unconventional myosins serve in intracellular movements. Their highly divergent tails are presumed to bind to membranous compartments, which would be moved relative to actin filaments. The chain is Unconventional myosin-Ih (MYO1H) from Homo sapiens (Human).